The chain runs to 321 residues: tRNA U34 carboxymethyltransferase (321 aa).

Residues Lys-90, Trp-104, Lys-109, Gly-129, Asp-151 to Thr-153, Ile-180 to Glu-181, Met-195, Tyr-199, and Arg-314 each bind carboxy-S-adenosyl-L-methionine.

It belongs to the class I-like SAM-binding methyltransferase superfamily. CmoB family. As to quaternary structure, homotetramer.

It catalyses the reaction carboxy-S-adenosyl-L-methionine + 5-hydroxyuridine(34) in tRNA = 5-carboxymethoxyuridine(34) in tRNA + S-adenosyl-L-homocysteine + H(+). In terms of biological role, catalyzes carboxymethyl transfer from carboxy-S-adenosyl-L-methionine (Cx-SAM) to 5-hydroxyuridine (ho5U) to form 5-carboxymethoxyuridine (cmo5U) at position 34 in tRNAs. This chain is tRNA U34 carboxymethyltransferase, found in Histophilus somni (strain 129Pt) (Haemophilus somnus).